The chain runs to 437 residues: Histidinol dehydrogenase (437 aa).

3 residues coordinate NAD(+): Tyr137, Gln199, and Asn222. Ser245, Gln267, and His270 together coordinate substrate. Residues Gln267 and His270 each coordinate Zn(2+). Catalysis depends on proton acceptor residues Glu335 and His336. Residues His336, Asp369, Glu423, and His428 each contribute to the substrate site. Asp369 contributes to the Zn(2+) binding site. Zn(2+) is bound at residue His428.

Belongs to the histidinol dehydrogenase family. Requires Zn(2+) as cofactor.

The enzyme catalyses L-histidinol + 2 NAD(+) + H2O = L-histidine + 2 NADH + 3 H(+). Its pathway is amino-acid biosynthesis; L-histidine biosynthesis; L-histidine from 5-phospho-alpha-D-ribose 1-diphosphate: step 9/9. Functionally, catalyzes the sequential NAD-dependent oxidations of L-histidinol to L-histidinaldehyde and then to L-histidine. The sequence is that of Histidinol dehydrogenase from Parasynechococcus marenigrum (strain WH8102).